Reading from the N-terminus, the 443-residue chain is Xaa-Pro dipeptidase (443 aa).

Asp246, Asp257, His339, Glu384, and Glu423 together coordinate Mn(2+).

The protein belongs to the peptidase M24B family. Bacterial-type prolidase subfamily. It depends on Mn(2+) as a cofactor.

It carries out the reaction Xaa-L-Pro dipeptide + H2O = an L-alpha-amino acid + L-proline. Splits dipeptides with a prolyl residue in the C-terminal position. The sequence is that of Xaa-Pro dipeptidase from Serratia proteamaculans (strain 568).